Here is a 304-residue protein sequence, read N- to C-terminus: Tetrahydromethanopterin S-methyltransferase subunit E (304 aa).

Helical transmembrane passes span 3–23 (PLIGMGVLALIGVAATIAGAS), 86–106 (PLFALVLGALIAACVHGTFAV), 131–151 (HTPVIMGYSFITTFCILVVSY), 152–172 (LMTVVLGHPFPLTMLAFIWGI), 233–253 (PVTGMAFGMTVFLGSWVTTVF), and 263–283 (WISVVAGVIIVLILIFWNWKI).

Belongs to the MtrE family. In terms of assembly, the complex is composed of 8 subunits; MtrA, MtrB, MtrC, MtrD, MtrE, MtrF, MtrG and MtrH.

It localises to the cell membrane. It carries out the reaction 5-methyl-5,6,7,8-tetrahydromethanopterin + coenzyme M + 2 Na(+)(in) = 5,6,7,8-tetrahydromethanopterin + methyl-coenzyme M + 2 Na(+)(out). It functions in the pathway one-carbon metabolism; methanogenesis from CO(2); methyl-coenzyme M from 5,10-methylene-5,6,7,8-tetrahydromethanopterin: step 2/2. Functionally, part of a complex that catalyzes the formation of methyl-coenzyme M and tetrahydromethanopterin from coenzyme M and methyl-tetrahydromethanopterin. This is an energy-conserving, sodium-ion translocating step. In Methanosarcina acetivorans (strain ATCC 35395 / DSM 2834 / JCM 12185 / C2A), this protein is Tetrahydromethanopterin S-methyltransferase subunit E.